Here is a 329-residue protein sequence, read N- to C-terminus: Beta-ribofuranosylphenol 5'-phosphate synthase (329 aa).

This sequence belongs to the beta-RFA-P synthase family. In terms of assembly, homodimer. Mg(2+) is required as a cofactor.

The enzyme catalyses 5-phospho-alpha-D-ribose 1-diphosphate + 4-hydroxybenzoate + H(+) = 4-(beta-D-ribofuranosyl)phenol 5'-phosphate + CO2 + diphosphate. The catalysed reaction is 4-aminobenzoate + 5-phospho-alpha-D-ribose 1-diphosphate + H(+) = 4-(beta-D-ribofuranosyl)aminobenzene 5'-phosphate + CO2 + diphosphate. Its pathway is cofactor biosynthesis; 5,6,7,8-tetrahydromethanopterin biosynthesis. Catalyzes the condensation of 4-hydroxybenzoate (HB) with 5-phospho-alpha-D-ribose 1-diphosphate (PRPP) to produce beta-ribofuranosylphenol 5'-phosphate (beta-RFH-P). Also catalyzes the condensation of 4-aminobenzoate (pABA) with PRPP to produce beta-ribofuranosylaminobenzene 5'-phosphate (beta-RFA-P). Only 4-hydroxybenzoate is known to be biosynthesized by methanogenic archaea, but 4-aminobenzoate can be used as substrate by growing methanogens when it is present in the growth medium. This chain is Beta-ribofuranosylphenol 5'-phosphate synthase, found in Methanothermobacter thermautotrophicus (strain ATCC 29096 / DSM 1053 / JCM 10044 / NBRC 100330 / Delta H) (Methanobacterium thermoautotrophicum).